The following is a 322-amino-acid chain: Phosphatidylserine decarboxylase proenzyme (322 aa).

Active-site charge relay system; for autoendoproteolytic cleavage activity residues include Asp90, His147, and Ser254. Ser254 (schiff-base intermediate with substrate; via pyruvic acid; for decarboxylase activity) is an active-site residue. At Ser254 the chain carries Pyruvic acid (Ser); by autocatalysis. The interval 294 to 322 is disordered; it reads EAEPAPLPEEEINAEHDASPLVDDKKDES. Residues 306 to 322 are compositionally biased toward basic and acidic residues; the sequence is NAEHDASPLVDDKKDES.

It belongs to the phosphatidylserine decarboxylase family. PSD-B subfamily. Prokaryotic type I sub-subfamily. As to quaternary structure, heterodimer of a large membrane-associated beta subunit and a small pyruvoyl-containing alpha subunit. Pyruvate serves as cofactor. Post-translationally, is synthesized initially as an inactive proenzyme. Formation of the active enzyme involves a self-maturation process in which the active site pyruvoyl group is generated from an internal serine residue via an autocatalytic post-translational modification. Two non-identical subunits are generated from the proenzyme in this reaction, and the pyruvate is formed at the N-terminus of the alpha chain, which is derived from the carboxyl end of the proenzyme. The autoendoproteolytic cleavage occurs by a canonical serine protease mechanism, in which the side chain hydroxyl group of the serine supplies its oxygen atom to form the C-terminus of the beta chain, while the remainder of the serine residue undergoes an oxidative deamination to produce ammonia and the pyruvoyl prosthetic group on the alpha chain. During this reaction, the Ser that is part of the protease active site of the proenzyme becomes the pyruvoyl prosthetic group, which constitutes an essential element of the active site of the mature decarboxylase.

The protein localises to the cell membrane. The catalysed reaction is a 1,2-diacyl-sn-glycero-3-phospho-L-serine + H(+) = a 1,2-diacyl-sn-glycero-3-phosphoethanolamine + CO2. It functions in the pathway phospholipid metabolism; phosphatidylethanolamine biosynthesis; phosphatidylethanolamine from CDP-diacylglycerol: step 2/2. Catalyzes the formation of phosphatidylethanolamine (PtdEtn) from phosphatidylserine (PtdSer). The protein is Phosphatidylserine decarboxylase proenzyme of Citrobacter koseri (strain ATCC BAA-895 / CDC 4225-83 / SGSC4696).